Consider the following 362-residue polypeptide: Phospho-2-dehydro-3-deoxyheptonate aldolase (362 aa).

Belongs to the class-I DAHP synthase family.

The enzyme catalyses D-erythrose 4-phosphate + phosphoenolpyruvate + H2O = 7-phospho-2-dehydro-3-deoxy-D-arabino-heptonate + phosphate. It participates in metabolic intermediate biosynthesis; chorismate biosynthesis; chorismate from D-erythrose 4-phosphate and phosphoenolpyruvate: step 1/7. Functionally, stereospecific condensation of phosphoenolpyruvate (PEP) and D-erythrose-4-phosphate (E4P) giving rise to 3-deoxy-D-arabino-heptulosonate-7-phosphate (DAHP). The chain is Phospho-2-dehydro-3-deoxyheptonate aldolase (aroG) from Haemophilus influenzae (strain ATCC 51907 / DSM 11121 / KW20 / Rd).